Consider the following 280-residue polypeptide: Alpha-methyl-mannoside-specific lectin (280 aa).

The first 26 residues, 1-26, serve as a signal peptide directing secretion; that stretch reads MAISKKILPLLSIATIFLLLLNKAHS. Residues aspartate 114 and glycine 134 each contribute to the a carbohydrate site. Mn(2+)-binding residues include glutamate 156 and aspartate 158. Ca(2+)-binding residues include aspartate 158 and phenylalanine 160. Positions 165 and 166 each coordinate a carbohydrate. Positions 166 and 169 each coordinate Ca(2+). The Mn(2+) site is built by aspartate 169 and histidine 174. 2 residues coordinate a carbohydrate: glycine 248 and glutamine 250.

This sequence belongs to the leguminous lectin family. As to quaternary structure, homodimer. Glycosylated.

In terms of biological role, alpha-methyl-D-mannoside-specific lectin. Has hemagglutinating activity towards rabbit erythrocytes. Binds to cytokinins and significantly inhibits physiological effects of cytokinin activity such as cotyledon expansion and delayed leaf senescence. This Arachis hypogaea (Peanut) protein is Alpha-methyl-mannoside-specific lectin.